Reading from the N-terminus, the 166-residue chain is UPF0178 protein BPUM_2255 (166 aa).

The protein belongs to the UPF0178 family.

This Bacillus pumilus (strain SAFR-032) protein is UPF0178 protein BPUM_2255.